The primary structure comprises 452 residues: MLRLLIGLLLMSFISLQSASWQEPLRVSIEFVDLPKKIIRFPAHDLQVGEFGFVVTKLSDYEIVNSEVVIIAVENGVATAKFRAFESMKQRHLPTPRMVARKGDLVYFRQFNNQAFLIAPNDELYEQIRATNTDINFISSDLLVTFLNGFDPKIANLRKACNVYSVGVIYIVTTNTLNILSCESFEILEKRELDTSGVTKTSTPFFSRVEGIDAGTLGKLFSGSQSKNYFAYYDALVKKEKRKEVRIKKREEKIDSREIKREIKQEAIKEPKKANQGTQNAPTLEEKNYQKAERKLDAKEERRYLRDERKKAKATKKAMEFEEREKEHDERDEQETEGRRKALEMDKGDKKEERVKPKENEREIKQEAIKEPSDGNNATQQGEKQNAPKENNAQKEENKPNSKEEKRRLKEEKKKAKAEQRAREFEQRAREHQERDEKELEERRKALEAGKK.

Residues 265-452 (QEAIKEPKKA…RRKALEAGKK (188 aa)) form a disordered region. 2 stretches are compositionally biased toward basic and acidic residues: residues 284 to 310 (LEEK…DERK) and 317 to 373 (KAME…KEPS). The segment covering 374–391 (DGNNATQQGEKQNAPKEN) has biased composition (polar residues). A compositionally biased stretch (basic and acidic residues) spans 392-452 (NAQKEENKPN…RRKALEAGKK (61 aa)).

The protein localises to the cell surface. Functionally, binds plasminogen, specifically, and in a concentration and lysine-dependent manner. Plasminogen is the precursor of plasmin, a serine protease that cleaves fibrin, fibronectin, laminin and vitronectin. Acquisition of plasminogen/plasmin could enable H.pylori to degrade host components. The chain is Plasminogen-binding protein PgbA (pgbA) from Helicobacter pylori (strain ATCC 700392 / 26695) (Campylobacter pylori).